The sequence spans 465 residues: Ribosome biogenesis protein YTM1 (465 aa).

Positions 18–99 are ubiquitin-like (UBL) domain; the sequence is ARLRFSTRDE…ETTLDVEYVR (82 aa). WD repeat units lie at residues 111 to 153, 160 to 198, 205 to 242, 277 to 317, 319 to 358, 364 to 404, and 427 to 465; these read LHDD…IHTS, GHQS…KGIT, GHKG…SPAV, GHTA…LVDT, TTSH…TTVS, GHTN…TDTD, and GDGV…PKTA. Residues 235-272 form a disordered region; sequence KKSESPAVPQNLLPSSSARSSKRRKLNSSASTSQRGPL.

The protein belongs to the WD repeat WDR12/YTM1 family. Component of the NOP7 complex, composed of ERB1, NOP7 and YTM1. The complex is held together by ERB1, which interacts with NOP7 via its N-terminal domain and with YTM1 via a high-affinity interaction between the seven-bladed beta-propeller domains of the 2 proteins. The NOP7 complex associates with the 66S pre-ribosome. Interacts (via UBL domain) with MDN1 (via VWFA/MIDAS domain).

It is found in the nucleus. It localises to the nucleolus. The protein resides in the nucleoplasm. Its function is as follows. Component of the NOP7 complex, which is required for maturation of the 25S and 5.8S ribosomal RNAs and formation of the 60S ribosome. This is Ribosome biogenesis protein YTM1 from Coccidioides immitis (strain RS) (Valley fever fungus).